We begin with the raw amino-acid sequence, 20 residues long: Putative 18 kDa spermidine-binding protein (20 aa).

As to quaternary structure, dimer of 18 kDa and 60 kDa subunit.

It localises to the microsome membrane. It is found in the endoplasmic reticulum membrane. Its function is as follows. May have spermidine-binding activity. The chain is Putative 18 kDa spermidine-binding protein from Zea mays (Maize).